A 401-amino-acid polypeptide reads, in one-letter code: Phosphoglycerate kinase (401 aa).

Residues 24-26 (DFN), arginine 40, 63-66 (HFGR), arginine 122, and arginine 155 contribute to the substrate site. ATP is bound by residues lysine 206, glycine 297, glutamate 328, and 357–360 (GGDS).

It belongs to the phosphoglycerate kinase family. As to quaternary structure, monomer.

The protein resides in the cytoplasm. It catalyses the reaction (2R)-3-phosphoglycerate + ATP = (2R)-3-phospho-glyceroyl phosphate + ADP. It participates in carbohydrate degradation; glycolysis; pyruvate from D-glyceraldehyde 3-phosphate: step 2/5. In Prochlorococcus marinus (strain NATL2A), this protein is Phosphoglycerate kinase.